A 255-amino-acid polypeptide reads, in one-letter code: Hydroxyacylglutathione hydrolase (255 aa).

Zn(2+) is bound by residues His56, His58, Asp60, His61, His114, Asp133, and His171.

Belongs to the metallo-beta-lactamase superfamily. Glyoxalase II family. Monomer. Zn(2+) is required as a cofactor.

It carries out the reaction an S-(2-hydroxyacyl)glutathione + H2O = a 2-hydroxy carboxylate + glutathione + H(+). Its pathway is secondary metabolite metabolism; methylglyoxal degradation; (R)-lactate from methylglyoxal: step 2/2. Functionally, thiolesterase that catalyzes the hydrolysis of S-D-lactoyl-glutathione to form glutathione and D-lactic acid. This chain is Hydroxyacylglutathione hydrolase, found in Nitrobacter winogradskyi (strain ATCC 25391 / DSM 10237 / CIP 104748 / NCIMB 11846 / Nb-255).